Reading from the N-terminus, the 397-residue chain is Phosphoglycerate kinase (397 aa).

Residues 25-27, Arg-41, 64-67, Arg-118, and Arg-151 contribute to the substrate site; these read DLN and HLGR. ATP is bound by residues Lys-202, Glu-324, and 350–353; that span reads GGDT.

The protein belongs to the phosphoglycerate kinase family. In terms of assembly, monomer.

It is found in the cytoplasm. It carries out the reaction (2R)-3-phosphoglycerate + ATP = (2R)-3-phospho-glyceroyl phosphate + ADP. It functions in the pathway carbohydrate degradation; glycolysis; pyruvate from D-glyceraldehyde 3-phosphate: step 2/5. The protein is Phosphoglycerate kinase of Acidovorax ebreus (strain TPSY) (Diaphorobacter sp. (strain TPSY)).